Reading from the N-terminus, the 191-residue chain is UPF0312 protein Sputw3181_1309 (191 aa).

Residues 1–22 form the signal peptide; sequence MKKQLLSALIGVSLLVPMAASA.

Belongs to the UPF0312 family. Type 1 subfamily.

Its subcellular location is the periplasm. This is UPF0312 protein Sputw3181_1309 from Shewanella sp. (strain W3-18-1).